The chain runs to 327 residues: Vacuolar protein sorting-associated protein 26A (327 aa).

The tract at residues 306 to 327 (RTNFHQRFESPDSQASAEQPEM) is disordered. At Ser315 the chain carries Phosphoserine. Polar residues predominate over residues 316-327 (PDSQASAEQPEM).

Belongs to the VPS26 family. In terms of assembly, component of the heterotrimeric retromer cargo-selective complex (CSC), also described as vacuolar protein sorting subcomplex (VPS), formed by VPS26 (VPS26A or VPS26B), VPS29 and VPS35. The CSC has a highly elongated structure with VPS26 and VPS29 binding independently at opposite distal ends of VPS35 as central platform. The CSC is believed to associate with variable sorting nexins to form functionally distinct retromer complex variants. The originally described retromer complex (also called SNX-BAR retromer) is a pentamer containing the CSC and a heterodimeric membrane-deforming subcomplex formed between SNX1 or SNX2 and SNX5 or SNX6 (also called SNX-BAR subcomplex); the respective CSC and SNX-BAR subcomplexes associate with low affinity. The CSC associates with SNX3 to form a SNX3-retromer complex. The CSC associates with SNX27, the WASH complex and the SNX-BAR subcomplex to form the SNX27-retromer complex. Interacts with VPS29, VPS35, SNX27. Interacts with SNX1, SNX2, SNX5, SNX6, SNX3, RAB7A, ECPAS, EHD1, WASHC5, SORL1.

It is found in the cytoplasm. The protein resides in the endosome membrane. Its subcellular location is the early endosome. Acts as a component of the retromer cargo-selective complex (CSC). The CSC is believed to be the core functional component of retromer or respective retromer complex variants acting to prevent missorting of selected transmembrane cargo proteins into the lysosomal degradation pathway. The recruitment of the CSC to the endosomal membrane involves RAB7A and SNX3. The SNX-BAR retromer mediates retrograde transport of cargo proteins from endosomes to the trans-Golgi network (TGN) and is involved in endosome-to-plasma membrane transport for cargo protein recycling. The SNX3-retromer mediates the retrograde endosome-to-TGN transport of WLS distinct from the SNX-BAR retromer pathway. The SNX27-retromer is believed to be involved in endosome-to-plasma membrane trafficking and recycling of a broad spectrum of cargo proteins. The CSC complex seems to act as recruitment hub for other proteins, such as the WASH complex and TBC1D5. Required for retrograde transport of lysosomal enzyme receptor IGF2R. Required to regulate transcytosis of the polymeric immunoglobulin receptor (pIgR-pIgA). Required for the endosomal localization of WASHC2 (indicative for the WASH complex). Required for the endosomal localization of TBC1D5. Mediates retromer cargo recognition of SORL1 and is involved in trafficking of SORL1 implicated in sorting and processing of APP. Involved in retromer-independent lysosomal sorting of F2R. Involved in recycling of ADRB2. Acts redundantly with VSP26B in SNX-27 mediated endocytic recycling of SLC2A1/GLUT1. Enhances the affinity of SNX27 for PDZ-binding motifs in cargo proteins. The sequence is that of Vacuolar protein sorting-associated protein 26A (Vps26a) from Mus musculus (Mouse).